The following is a 690-amino-acid chain: Glycine--tRNA ligase beta subunit (690 aa).

The protein belongs to the class-II aminoacyl-tRNA synthetase family. Tetramer of two alpha and two beta subunits.

It localises to the cytoplasm. The catalysed reaction is tRNA(Gly) + glycine + ATP = glycyl-tRNA(Gly) + AMP + diphosphate. The sequence is that of Glycine--tRNA ligase beta subunit from Desulfitobacterium hafniense (strain DSM 10664 / DCB-2).